The sequence spans 511 residues: MKKRALVSVSDKTGVVEFVKGLLEQGIEVISTGGTKKLLEENGLQVIGISEVTGFPEIMDGRVKTLHPNIHGGLLAVRDNETHVTQMNELGMEPIDFVVVNLYPFKETIAKPDVTFADAIENIDIGGPTMIRSAAKNHKFVSVIVDPVDYDIVLAELKENGEVAEETKRKLAAKVFRHTAAYDALISNYLTEQMGEESPETLTVTFEKKQDLRYGENPHQKATFYKAPFAATSSVAYAEQLHGKELSYNNINDADAALSIVKEFTEPAVVAVKHMNPCGVGVGTDIHEAYTRAYEADPVSIFGGIIAANREIDKATAEKLHEIFLEIVIAPSFSQEALEVLQSKKNLRLLTINIEKATSASKKLTSVQGGLLVQEEDTLSLDESTISIPTKREPSEQEWKDLKLAWKVVKHVKSNAIVLAKDDMTIGVGAGQMNRVGSAKIAITQAGEKAQGSALASDAFFPMPDTLEEAAKAGITAIIQPGGSIRDEDSIKVADTYGIAMVFTGVRHFKH.

The 145-residue stretch at 1-145 (MKKRALVSVS…KNHKFVSVIV (145 aa)) folds into the MGS-like domain.

This sequence belongs to the PurH family.

It catalyses the reaction (6R)-10-formyltetrahydrofolate + 5-amino-1-(5-phospho-beta-D-ribosyl)imidazole-4-carboxamide = 5-formamido-1-(5-phospho-D-ribosyl)imidazole-4-carboxamide + (6S)-5,6,7,8-tetrahydrofolate. The catalysed reaction is IMP + H2O = 5-formamido-1-(5-phospho-D-ribosyl)imidazole-4-carboxamide. Its pathway is purine metabolism; IMP biosynthesis via de novo pathway; 5-formamido-1-(5-phospho-D-ribosyl)imidazole-4-carboxamide from 5-amino-1-(5-phospho-D-ribosyl)imidazole-4-carboxamide (10-formyl THF route): step 1/1. It participates in purine metabolism; IMP biosynthesis via de novo pathway; IMP from 5-formamido-1-(5-phospho-D-ribosyl)imidazole-4-carboxamide: step 1/1. This Bacillus cereus (strain ATCC 14579 / DSM 31 / CCUG 7414 / JCM 2152 / NBRC 15305 / NCIMB 9373 / NCTC 2599 / NRRL B-3711) protein is Bifunctional purine biosynthesis protein PurH.